The following is an 894-amino-acid chain: Alpha-actinin-2 (894 aa).

The segment at 1-254 is actin-binding; the sequence is MNQIEPGVQY…IMTYVSCFYH (254 aa). Calponin-homology (CH) domains are found at residues 38 to 142 and 151 to 257; these read KQQR…LRFA and TSAK…HAFA. Thr-237 carries the post-translational modification Phosphothreonine. 4 Spectrin repeats span residues 281–391, 401–506, 516–627, and 637–740; these read RLME…WLLN, HLAE…ALER, QLHL…SLQE, and RLRR…EVET. 2 EF-hand domains span residues 753 to 788 and 789 to 824; these read EQMN…MGYD and LGEA…ETAD. The Ca(2+) site is built by Asp-766, Asn-770, Asp-777, Asp-802, Asn-804, and Thr-808.

It belongs to the alpha-actinin family. As to quaternary structure, homodimer; antiparallel. Also forms heterodimers with ACTN3. Interacts with ADAM12, MYOZ1, MYOZ2 and MYOZ3. Interacts via its C-terminal region with the LDB3 PDZ domain. Interacts with XIRP2. Interacts with DST (via N-terminus). Interacts with PARVB. Interacts with SYNPO2. Ubiquitinated by FBXL22, leading to proteasomal degradation.

It is found in the cytoplasm. Its subcellular location is the myofibril. The protein localises to the sarcomere. The protein resides in the z line. F-actin cross-linking protein which is thought to anchor actin to a variety of intracellular structures. This is a bundling protein. This chain is Alpha-actinin-2 (Actn2), found in Mus musculus (Mouse).